Consider the following 142-residue polypeptide: Putative pre-16S rRNA nuclease (142 aa).

The protein belongs to the YqgF nuclease family.

The protein resides in the cytoplasm. In terms of biological role, could be a nuclease involved in processing of the 5'-end of pre-16S rRNA. In Lactobacillus delbrueckii subsp. bulgaricus (strain ATCC 11842 / DSM 20081 / BCRC 10696 / JCM 1002 / NBRC 13953 / NCIMB 11778 / NCTC 12712 / WDCM 00102 / Lb 14), this protein is Putative pre-16S rRNA nuclease.